The primary structure comprises 398 residues: Cytochrome P450 165B3 (398 aa).

A heme-binding site is contributed by C347.

This sequence belongs to the cytochrome P450 family. Heme is required as a cofactor.

It participates in antibiotic biosynthesis; vancomycin biosynthesis. In terms of biological role, involved in the coupling of aromatic side chains of the heptapeptide of vancomycin. This Amycolatopsis orientalis (Nocardia orientalis) protein is Cytochrome P450 165B3 (cyp165B3).